The primary structure comprises 333 residues: Phosphoribosylformylglycinamidine cyclo-ligase (333 aa).

Belongs to the AIR synthase family.

The protein resides in the cytoplasm. It catalyses the reaction 2-formamido-N(1)-(5-O-phospho-beta-D-ribosyl)acetamidine + ATP = 5-amino-1-(5-phospho-beta-D-ribosyl)imidazole + ADP + phosphate + H(+). The protein operates within purine metabolism; IMP biosynthesis via de novo pathway; 5-amino-1-(5-phospho-D-ribosyl)imidazole from N(2)-formyl-N(1)-(5-phospho-D-ribosyl)glycinamide: step 2/2. This chain is Phosphoribosylformylglycinamidine cyclo-ligase, found in Clostridium perfringens (strain 13 / Type A).